The primary structure comprises 162 residues: ATP synthase subunit b (162 aa).

The helical transmembrane segment at 2–22 threads the bilayer; sequence LEFNATLLAQIVDFIILLIFL.

Belongs to the ATPase B chain family. F-type ATPases have 2 components, F(1) - the catalytic core - and F(0) - the membrane proton channel. F(1) has five subunits: alpha(3), beta(3), gamma(1), delta(1), epsilon(1). F(0) has three main subunits: a(1), b(2) and c(10-14). The alpha and beta chains form an alternating ring which encloses part of the gamma chain. F(1) is attached to F(0) by a central stalk formed by the gamma and epsilon chains, while a peripheral stalk is formed by the delta and b chains.

The protein resides in the cell membrane. In terms of biological role, f(1)F(0) ATP synthase produces ATP from ADP in the presence of a proton or sodium gradient. F-type ATPases consist of two structural domains, F(1) containing the extramembraneous catalytic core and F(0) containing the membrane proton channel, linked together by a central stalk and a peripheral stalk. During catalysis, ATP synthesis in the catalytic domain of F(1) is coupled via a rotary mechanism of the central stalk subunits to proton translocation. Component of the F(0) channel, it forms part of the peripheral stalk, linking F(1) to F(0). This is ATP synthase subunit b from Pelotomaculum thermopropionicum (strain DSM 13744 / JCM 10971 / SI).